We begin with the raw amino-acid sequence, 407 residues long: Endo-1,4-beta-xylanase (407 aa).

Positions 1–28 (MRNVVRKPLTIGLALTLLLPMGMTATSA) are cleaved as a signal peptide. Residues 42–406 (ALNAPQLDQR…KPAYWAIIDH (365 aa)) enclose the GH10 domain. Glutamate 187 acts as the Proton donor in catalysis. Glutamate 293 functions as the Nucleophile in the catalytic mechanism.

It belongs to the glycosyl hydrolase 10 (cellulase F) family.

It is found in the secreted. The catalysed reaction is Endohydrolysis of (1-&gt;4)-beta-D-xylosidic linkages in xylans.. It participates in glycan degradation; xylan degradation. The polypeptide is Endo-1,4-beta-xylanase (Geobacillus stearothermophilus (Bacillus stearothermophilus)).